We begin with the raw amino-acid sequence, 200 residues long: Phospholipase A2 inhibitor CgMIP-I (200 aa).

An N-terminal signal peptide occupies residues Met-1–Ser-19. Cystine bridges form between Cys-22–Cys-46, Cys-25–Cys-32, Cys-39–Cys-67, Cys-73–Cys-94, Cys-95–Cys-100, Cys-118–Cys-143, and Cys-136–Cys-165. N-linked (GlcNAc...) asparagine glycosylation is present at Asn-176.

It belongs to the CNF-like-inhibitor family. Homomer of 110 kDa composed of 20-25-kDa subunits. In terms of processing, N-glycosylated. The glycosidic chain may contain superficial sialic acid residues. As to expression, expressed by the liver.

It localises to the secreted. Inhibits the enzymatic activity of basic phospholipase A2. Specifically neutralizes PLA2, myotoxic, edema-forming, cytolytic, and anti-coagulant activities, as well as intracerebral lethal effect of the basic myotoxin I from the same venom (AC P0DQP6), crotoxin heterodimer and crotoxin subunit B alone. Does not block the enzymatic activity of crude acidic PLA2 fractions from the same venom. This is Phospholipase A2 inhibitor CgMIP-I from Cerrophidion godmani (Porthidium godmani).